Here is a 467-residue protein sequence, read N- to C-terminus: Iroquois-class homeodomain protein irx-1-A (467 aa).

The homeobox; TALE-type DNA-binding region spans 126 to 188; the sequence is DPGRPKNATR…NARRRLKKEN (63 aa). Disordered stretches follow at residues 197–306, 318–344, and 410–467; these read KEDD…PPHS, TSPD…QHPA, and SLSS…LPSA. Composition is skewed to acidic residues over residues 215–225 and 233–244; these read EDDEEIDLESI and NDGEQSNEEEDE. Over residues 245–262 the composition is skewed to basic and acidic residues; it reads KLEHLRQGEKESLKKESE. The segment covering 415-431 has biased composition (basic and acidic residues); the sequence is KTPERTSPKHSDRENVP. Over residues 447–460 the composition is skewed to polar residues; it reads RENTLSQQEGTSRI.

Belongs to the TALE/IRO homeobox family. As to expression, expressed early in neural differentiation in the neural plate, and expression continues in the neural tube after neural fold closure. Expressed in the presumptive midbrain territory. Also expressed in the prospective neural crest and the preplacodal field, anterior to the neural plate. Strongly expressed in the profundal placode and weakly expressed in the trigeminal placode. Also expressed in the mesoderm in the Spemann organizer from the start of gastrulation, and subsequently in its derivatives; namely in the notochord as well as in the somites of stage 25 embryos, and the somites and notochord of tailbud embryos. Also expressed in specific and overlapping dynamic patterns with irx2 and irx3 during pronephric kidney development. Renal expression begins in the dorsal region of the pronephric anlage at mid neurula stage and continues to at least tailbud stages where expression is confined to the intermediate tubule segment IT1. Renal expression is maintained at tadpole stages.

It is found in the nucleus. In terms of biological role, acts partially redundantly with other irx members in neural patterning. Required for formation of the posterior forebrain, midbrain, hindbrain, and to a lesser extent, spinal cord. Acts early in neural plate development to induce expression of some but not all proneural genes, and specify a neural precursor state. Also up-regulates repressors that prevent neuronal differentiation. Patterns the neuroectoderm in both the anterior/posterior and dorsal/ventral axes. Acts primarily as a transcriptional repressor during neural development, and binds to the bmp4 promoter to repress gene expression and thus mediate down-regulation of bmp4 by wnt signaling. Controls multiple processes through bmp4-repression including neural plate development, neural crest specification and Spemann organizer development. Involved in the specification of the preplacodal field at the anterior border of the neural plate. Regulates the genetic cascade of interactions that are necessary for positioning the isthmus organizer and the formation of the midbrain-hindbrain boundary. Required during at least two stages of pronephros kidney development; during neurula stages, maintains transcription of key renal genes to define the size and identity of the pronephric anlage, probably in part through regulation of bmp-signaling. Subsequently required for proper formation of the intermediate tubule segment of the pronephros. Acts principally as a transcriptional activator during pronephros development. The chain is Iroquois-class homeodomain protein irx-1-A (irx1-a) from Xenopus laevis (African clawed frog).